The following is a 189-amino-acid chain: Photosystem I assembly protein Ycf4 (189 aa).

2 consecutive transmembrane segments (helical) span residues 25 to 45 (SVYF…LAGL) and 62 to 82 (LVFI…SLAG).

Belongs to the Ycf4 family.

It localises to the cellular thylakoid membrane. Its function is as follows. Seems to be required for the assembly of the photosystem I complex. The polypeptide is Photosystem I assembly protein Ycf4 (Synechococcus sp. (strain JA-2-3B'a(2-13)) (Cyanobacteria bacterium Yellowstone B-Prime)).